Here is a 341-residue protein sequence, read N- to C-terminus: LIM and senescent cell antigen-like-containing domain protein 2 (341 aa).

5 LIM zinc-binding domains span residues Ala-13–Pro-74, Cys-76–Lys-133, Phe-138–Ile-195, Pro-196–Asp-255, and Val-256–Glu-315. The residue at position 328 (Ser-328) is a Phosphoserine.

As to quaternary structure, interacts with integrin-linked protein kinase 1 (ILK) via the first LIM domain, and in competition with LIMS1. Part of the heterotrimeric IPP complex composed of integrin-linked kinase (ILK), LIMS1 or LIMS2, and PARVA. Interacts with TGFB1I1. In terms of tissue distribution, detected in heart, lung, kidney, liver, urinary bladder, fat, skin, skeletal muscle, uterus, large intestine and testis.

Its subcellular location is the cell junction. It localises to the focal adhesion. It is found in the cell membrane. Adapter protein in a cytoplasmic complex linking beta-integrins to the actin cytoskeleton, bridges the complex to cell surface receptor tyrosine kinases and growth factor receptors. In Mus musculus (Mouse), this protein is LIM and senescent cell antigen-like-containing domain protein 2 (Lims2).